The following is a 316-amino-acid chain: Acetyl-coenzyme A carboxylase carboxyl transferase subunit alpha (316 aa).

A CoA carboxyltransferase C-terminal domain is found at 40 to 293 (LERRSKDALR…GETIENGFRE (254 aa)).

This sequence belongs to the AccA family. In terms of assembly, acetyl-CoA carboxylase is a heterohexamer composed of biotin carboxyl carrier protein (AccB), biotin carboxylase (AccC) and two subunits each of ACCase subunit alpha (AccA) and ACCase subunit beta (AccD).

It is found in the cytoplasm. It catalyses the reaction N(6)-carboxybiotinyl-L-lysyl-[protein] + acetyl-CoA = N(6)-biotinyl-L-lysyl-[protein] + malonyl-CoA. It functions in the pathway lipid metabolism; malonyl-CoA biosynthesis; malonyl-CoA from acetyl-CoA: step 1/1. Its function is as follows. Component of the acetyl coenzyme A carboxylase (ACC) complex. First, biotin carboxylase catalyzes the carboxylation of biotin on its carrier protein (BCCP) and then the CO(2) group is transferred by the carboxyltransferase to acetyl-CoA to form malonyl-CoA. This chain is Acetyl-coenzyme A carboxylase carboxyl transferase subunit alpha, found in Chelativorans sp. (strain BNC1).